A 205-amino-acid polypeptide reads, in one-letter code: Urease accessory protein UreG (205 aa).

Residue 14-21 coordinates GTP; the sequence is GPVGSGKT.

This sequence belongs to the SIMIBI class G3E GTPase family. UreG subfamily. Homodimer. UreD, UreF and UreG form a complex that acts as a GTP-hydrolysis-dependent molecular chaperone, activating the urease apoprotein by helping to assemble the nickel containing metallocenter of UreC. The UreE protein probably delivers the nickel.

It is found in the cytoplasm. In terms of biological role, facilitates the functional incorporation of the urease nickel metallocenter. This process requires GTP hydrolysis, probably effectuated by UreG. In Escherichia coli, this protein is Urease accessory protein UreG.